The chain runs to 97 residues: Aspartyl/glutamyl-tRNA(Asn/Gln) amidotransferase subunit C (97 aa).

Positions 58–78 (LPQGRLRKDTPRDPLDRENAL) are disordered. A compositionally biased stretch (basic and acidic residues) spans 63–77 (LRKDTPRDPLDRENA).

This sequence belongs to the GatC family. As to quaternary structure, heterotrimer of A, B and C subunits.

The enzyme catalyses L-glutamyl-tRNA(Gln) + L-glutamine + ATP + H2O = L-glutaminyl-tRNA(Gln) + L-glutamate + ADP + phosphate + H(+). The catalysed reaction is L-aspartyl-tRNA(Asn) + L-glutamine + ATP + H2O = L-asparaginyl-tRNA(Asn) + L-glutamate + ADP + phosphate + 2 H(+). Functionally, allows the formation of correctly charged Asn-tRNA(Asn) or Gln-tRNA(Gln) through the transamidation of misacylated Asp-tRNA(Asn) or Glu-tRNA(Gln) in organisms which lack either or both of asparaginyl-tRNA or glutaminyl-tRNA synthetases. The reaction takes place in the presence of glutamine and ATP through an activated phospho-Asp-tRNA(Asn) or phospho-Glu-tRNA(Gln). The polypeptide is Aspartyl/glutamyl-tRNA(Asn/Gln) amidotransferase subunit C (Saccharolobus islandicus (strain Y.N.15.51 / Yellowstone #2) (Sulfolobus islandicus)).